We begin with the raw amino-acid sequence, 368 residues long: Ribosomal RNA large subunit methyltransferase M (368 aa).

S-adenosyl-L-methionine contacts are provided by residues Ser199, 232–235, Asp251, Asp271, and Asp287; that span reads APGG. Lys316 (proton acceptor) is an active-site residue.

The protein belongs to the class I-like SAM-binding methyltransferase superfamily. RNA methyltransferase RlmE family. RlmM subfamily. As to quaternary structure, monomer.

It is found in the cytoplasm. It catalyses the reaction cytidine(2498) in 23S rRNA + S-adenosyl-L-methionine = 2'-O-methylcytidine(2498) in 23S rRNA + S-adenosyl-L-homocysteine + H(+). Functionally, catalyzes the 2'-O-methylation at nucleotide C2498 in 23S rRNA. The protein is Ribosomal RNA large subunit methyltransferase M of Aromatoleum aromaticum (strain DSM 19018 / LMG 30748 / EbN1) (Azoarcus sp. (strain EbN1)).